The following is a 283-amino-acid chain: Putative Ig-like domain-containing protein ORF10 (283 aa).

Positions 1-55 (MIDKRNKKAVTHISTCLCHSSIPIYGDSPFLNTHRAAMDPRPLVLLLLLASHIST) are cleaved as a signal peptide. 8 N-linked (GlcNAc...) asparagine; by host glycosylation sites follow: Asn75, Asn92, Asn121, Asn157, Asn179, Asn198, Asn223, and Asn229. Positions 129 to 227 (QPLGQSIHHA…IDQQTNLTLT (99 aa)) constitute an Ig-like domain.

In Galliformes (FAdV-1), this protein is Putative Ig-like domain-containing protein ORF10.